Reading from the N-terminus, the 103-residue chain is uncharacterized protein (103 aa).

The interval 1-103 (MAGARRRARC…WRGGSCTSQR (103 aa)) is disordered. 2 stretches are compositionally biased toward basic residues: residues 55-65 (RRPGPGRRARS) and 74-84 (RPPHSRTRARR).

This sequence belongs to the epstein-barr virus RPMS1 family.

This is an uncharacterized protein from Epstein-Barr virus (strain GD1) (HHV-4).